Here is a 539-residue protein sequence, read N- to C-terminus: Monocarboxylate transporter 8 (539 aa).

The interval 1–92 (MALQSQASEE…VETRGTARGF (92 aa)) is disordered. Residue Ala-2 is modified to N-acetylalanine. Residues 2 to 96 (ALQSQASEEA…GTARGFQPPE (95 aa)) are Cytoplasmic-facing. The segment covering 31 to 41 (PESEPEPEPEP) has biased composition (acidic residues). The segment covering 42–64 (EPVPVPPPEPQPEPQPLPDPAPL) has biased composition (pro residues). Residues 97 to 117 (GGFGWVVVFAATWCNGSIFGI) traverse the membrane as a helical segment. Residues 118–143 (HNSVGILYSMLLEEEKEKNRQVEFQA) are Extracellular-facing. A helical membrane pass occupies residues 144–164 (AWVGALAMGMIFFCSPIVSIF). The Cytoplasmic segment spans residues 165-171 (TDRLGCR). The chain crosses the membrane as a helical span at residues 172–192 (ITATAGAAVAFIGLHTSSFTS). Topologically, residues 193–200 (SLSLRYFT) are extracellular. Residues 201 to 221 (YGILFGCGCSFAFQPSLVILG) traverse the membrane as a helical segment. Topologically, residues 222–229 (HYFQRRLG) are cytoplasmic. Residues 230-250 (LANGVVSAGSSIFSMSFPFLI) traverse the membrane as a helical segment. Residues 251 to 258 (RMLGDKIK) are Extracellular-facing. A helical membrane pass occupies residues 259–279 (LAQTFQVLSTFMFVLMLLSLT). The Cytoplasmic portion of the chain corresponds to 280-322 (YRPLLPSSQDTPSKRGVRTLHQRFLAQLRKYFNMRVFRQRTYR). A helical transmembrane segment spans residues 323–343 (IWAFGIAAAALGYFVPYVHLM). Over 344-356 (KYVEEEFSEIKET) the chain is Extracellular. A helical membrane pass occupies residues 357–377 (WVLLVCIGATSGLGRLVSGHI). Residues 378–386 (SDSIPGLKK) lie on the Cytoplasmic side of the membrane. A helical membrane pass occupies residues 387-407 (IYLQVLSFLLLGLMSMMIPLC). The Extracellular portion of the chain corresponds to 408–409 (RD). Residues 410–430 (FGGLIVVCLFLGLCDGFFITI) form a helical membrane-spanning segment. Residues 431 to 447 (MAPIAFELVGPMQASQA) are Cytoplasmic-facing. The helical transmembrane segment at 448–468 (IGYLLGMMALPMIAGPPIAGL) threads the bilayer. Topologically, residues 469–477 (LRNCFGDYH) are extracellular. Residues 478-498 (VAFYFAGVPPIIGAVILFFVP) form a helical membrane-spanning segment. The Cytoplasmic segment spans residues 499–539 (LMHQRMFKKEQRDSSKDKMLAPDPDPNGELLPGSPNPEEPI). Positions 508-518 (EQRDSSKDKML) are enriched in basic and acidic residues. Residues 508–539 (EQRDSSKDKMLAPDPDPNGELLPGSPNPEEPI) are disordered.

The protein belongs to the major facilitator superfamily. Monocarboxylate porter (TC 2.A.1.13) family. As to quaternary structure, monomer. Homodimer. Homooligomer. In terms of tissue distribution, highly expressed in liver and heart. In adult brain tissue expression is largely confined to endothelial cells of the blood-brain barrier (at protein level).

It is found in the cell membrane. Its subcellular location is the apical cell membrane. The catalysed reaction is 3,3',5-triiodo-L-thyronine(out) = 3,3',5-triiodo-L-thyronine(in). The enzyme catalyses L-thyroxine(out) = L-thyroxine(in). It carries out the reaction 3,3',5'-triiodo-L-thyronine(out) = 3,3',5'-triiodo-L-thyronine(in). It catalyses the reaction 3,3'-diiodo-L-thyronine(out) = 3,3'-diiodo-L-thyronine(in). Specific thyroid hormone transmembrane transporter, that mediates both uptake and efflux of thyroid hormones across the cell membrane independently of pH or a Na(+) gradient. Major substrates are the iodothyronines T3 and T4 and to a lesser extent rT3 and 3,3-diiodothyronine (3,3'-T2). Acts as an important mediator of thyroid hormone transport, especially T3, through the blood-brain barrier. The polypeptide is Monocarboxylate transporter 8 (SLC16A2) (Homo sapiens (Human)).